The chain runs to 151 residues: Deoxyuridine 5'-triphosphate nucleotidohydrolase (151 aa).

Residues arginine 70 to glycine 72, asparagine 83, leucine 87 to aspartate 89, and methionine 97 contribute to the substrate site.

It belongs to the dUTPase family. Requires Mg(2+) as cofactor.

It carries out the reaction dUTP + H2O = dUMP + diphosphate + H(+). Its pathway is pyrimidine metabolism; dUMP biosynthesis; dUMP from dCTP (dUTP route): step 2/2. Functionally, this enzyme is involved in nucleotide metabolism: it produces dUMP, the immediate precursor of thymidine nucleotides and it decreases the intracellular concentration of dUTP so that uracil cannot be incorporated into DNA. In Haemophilus influenzae (strain 86-028NP), this protein is Deoxyuridine 5'-triphosphate nucleotidohydrolase.